The chain runs to 99 residues: Aspartyl/glutamyl-tRNA(Asn/Gln) amidotransferase subunit C (99 aa).

Belongs to the GatC family. In terms of assembly, heterotrimer of A, B and C subunits.

It carries out the reaction L-glutamyl-tRNA(Gln) + L-glutamine + ATP + H2O = L-glutaminyl-tRNA(Gln) + L-glutamate + ADP + phosphate + H(+). The enzyme catalyses L-aspartyl-tRNA(Asn) + L-glutamine + ATP + H2O = L-asparaginyl-tRNA(Asn) + L-glutamate + ADP + phosphate + 2 H(+). In terms of biological role, allows the formation of correctly charged Asn-tRNA(Asn) or Gln-tRNA(Gln) through the transamidation of misacylated Asp-tRNA(Asn) or Glu-tRNA(Gln) in organisms which lack either or both of asparaginyl-tRNA or glutaminyl-tRNA synthetases. The reaction takes place in the presence of glutamine and ATP through an activated phospho-Asp-tRNA(Asn) or phospho-Glu-tRNA(Gln). The polypeptide is Aspartyl/glutamyl-tRNA(Asn/Gln) amidotransferase subunit C (Paracidovorax citrulli (strain AAC00-1) (Acidovorax citrulli)).